A 378-amino-acid polypeptide reads, in one-letter code: Mating-type protein MAT-1 (378 aa).

Residues 60-117 constitute a DNA-binding region (alpha box); it reads KARKALNAFVGFRCYYITIPMFKPWPMKKLSNLIGLLWEADPNKSLWSLMAKPWSTIR.

Belongs to the MATALPHA1 family.

The protein localises to the nucleus. Functionally, mating type proteins are sequence specific DNA-binding proteins that act as master switches in fungal differentiation by controlling gene expression in a cell type-specific fashion. Transcriptional activator that induces the transcription of alpha-specific genes. In Cochliobolus sativus (Common root rot and spot blotch fungus), this protein is Mating-type protein MAT-1 (MAT1).